We begin with the raw amino-acid sequence, 196 residues long: Beta-crystallin A2 (196 aa).

The segment at Met1–Gln11 is N-terminal arm. Beta/gamma crystallin 'Greek key' domains follow at residues Tyr12–Ser51 and Gly52–Lys98. The tract at residues Cys99–Asp104 is connecting peptide. Beta/gamma crystallin 'Greek key' domains lie at Ser105–Ala146 and Gly147–Gln195.

It belongs to the beta/gamma-crystallin family. In terms of assembly, homo/heterodimer, or complexes of higher-order. The structure of beta-crystallin oligomers seems to be stabilized through interactions between the N-terminal arms.

Its function is as follows. Crystallins are the dominant structural components of the vertebrate eye lens. The polypeptide is Beta-crystallin A2 (CRYBA2) (Gallus gallus (Chicken)).